We begin with the raw amino-acid sequence, 446 residues long: tRNA modification GTPase MnmE (446 aa).

The (6S)-5-formyl-5,6,7,8-tetrahydrofolate site is built by Arg-28, Glu-85, and Lys-124. One can recognise a TrmE-type G domain in the interval 220-372 (GLTVVLVGQP…LRAKLLQAAG (153 aa)). Asn-230 serves as a coordination point for K(+). Residues 230-235 (NVGKSS), 249-255 (TEIAGTT), and 274-277 (DTAG) each bind GTP. Residue Ser-234 coordinates Mg(2+). K(+)-binding residues include Thr-249, Ile-251, and Thr-254. Residue Thr-255 participates in Mg(2+) binding. (6S)-5-formyl-5,6,7,8-tetrahydrofolate is bound at residue Lys-446.

This sequence belongs to the TRAFAC class TrmE-Era-EngA-EngB-Septin-like GTPase superfamily. TrmE GTPase family. In terms of assembly, homodimer. Heterotetramer of two MnmE and two MnmG subunits. The cofactor is K(+).

It is found in the cytoplasm. Functionally, exhibits a very high intrinsic GTPase hydrolysis rate. Involved in the addition of a carboxymethylaminomethyl (cmnm) group at the wobble position (U34) of certain tRNAs, forming tRNA-cmnm(5)s(2)U34. The chain is tRNA modification GTPase MnmE from Thiobacillus denitrificans (strain ATCC 25259 / T1).